A 134-amino-acid polypeptide reads, in one-letter code: Small ribosomal subunit protein eS24A (134 aa).

Serine 2 carries the N-acetylserine modification. The disordered stretch occupies residues 100 to 134; that stretch reads IQKVARQQRKQRKNRGKKVFGTGKRLAKRKSKQQD. 2 stretches are compositionally biased toward basic residues: residues 105-117 and 124-134; these read RQQR…RGKK and RLAKRKSKQQD.

This sequence belongs to the eukaryotic ribosomal protein eS24 family. As to quaternary structure, component of the small ribosomal subunit (SSU). Mature yeast ribosomes consist of a small (40S) and a large (60S) subunit. The 40S small subunit contains 1 molecule of ribosomal RNA (18S rRNA) and at least 33 different proteins. The large 60S subunit contains 3 rRNA molecules (25S, 5.8S and 5S rRNA) and at least 46 different proteins.

The protein resides in the cytoplasm. Component of the ribosome, a large ribonucleoprotein complex responsible for the synthesis of proteins in the cell. The small ribosomal subunit (SSU) binds messenger RNAs (mRNAs) and translates the encoded message by selecting cognate aminoacyl-transfer RNA (tRNA) molecules. The large subunit (LSU) contains the ribosomal catalytic site termed the peptidyl transferase center (PTC), which catalyzes the formation of peptide bonds, thereby polymerizing the amino acids delivered by tRNAs into a polypeptide chain. The nascent polypeptides leave the ribosome through a tunnel in the LSU and interact with protein factors that function in enzymatic processing, targeting, and the membrane insertion of nascent chains at the exit of the ribosomal tunnel. The chain is Small ribosomal subunit protein eS24A (rps2401) from Schizosaccharomyces pombe (strain 972 / ATCC 24843) (Fission yeast).